The primary structure comprises 157 residues: SsrA-binding protein (157 aa).

Positions lysine 132–glycine 157 are disordered. Basic and acidic residues predominate over residues aspartate 135–arginine 151.

Belongs to the SmpB family.

It localises to the cytoplasm. Its function is as follows. Required for rescue of stalled ribosomes mediated by trans-translation. Binds to transfer-messenger RNA (tmRNA), required for stable association of tmRNA with ribosomes. tmRNA and SmpB together mimic tRNA shape, replacing the anticodon stem-loop with SmpB. tmRNA is encoded by the ssrA gene; the 2 termini fold to resemble tRNA(Ala) and it encodes a 'tag peptide', a short internal open reading frame. During trans-translation Ala-aminoacylated tmRNA acts like a tRNA, entering the A-site of stalled ribosomes, displacing the stalled mRNA. The ribosome then switches to translate the ORF on the tmRNA; the nascent peptide is terminated with the 'tag peptide' encoded by the tmRNA and targeted for degradation. The ribosome is freed to recommence translation, which seems to be the essential function of trans-translation. This chain is SsrA-binding protein, found in Rhodopseudomonas palustris (strain ATCC BAA-98 / CGA009).